Here is a 100-residue protein sequence, read N- to C-terminus: Aspartyl/glutamyl-tRNA(Asn/Gln) amidotransferase subunit C (100 aa).

It belongs to the GatC family. Heterotrimer of A, B and C subunits.

It catalyses the reaction L-glutamyl-tRNA(Gln) + L-glutamine + ATP + H2O = L-glutaminyl-tRNA(Gln) + L-glutamate + ADP + phosphate + H(+). The enzyme catalyses L-aspartyl-tRNA(Asn) + L-glutamine + ATP + H2O = L-asparaginyl-tRNA(Asn) + L-glutamate + ADP + phosphate + 2 H(+). Allows the formation of correctly charged Asn-tRNA(Asn) or Gln-tRNA(Gln) through the transamidation of misacylated Asp-tRNA(Asn) or Glu-tRNA(Gln) in organisms which lack either or both of asparaginyl-tRNA or glutaminyl-tRNA synthetases. The reaction takes place in the presence of glutamine and ATP through an activated phospho-Asp-tRNA(Asn) or phospho-Glu-tRNA(Gln). The protein is Aspartyl/glutamyl-tRNA(Asn/Gln) amidotransferase subunit C of Streptococcus agalactiae serotype Ia (strain ATCC 27591 / A909 / CDC SS700).